Here is a 199-residue protein sequence, read N- to C-terminus: Putative 3-methyladenine DNA glycosylase (199 aa).

Belongs to the DNA glycosylase MPG family.

The protein is Putative 3-methyladenine DNA glycosylase of Rhizobium etli (strain ATCC 51251 / DSM 11541 / JCM 21823 / NBRC 15573 / CFN 42).